Reading from the N-terminus, the 120-residue chain is Response regulator receiver protein CpdR (120 aa).

In terms of domain architecture, Response regulatory spans 3 to 117 (RILLAEDDND…DLVNEIEKML (115 aa)). A 4-aspartylphosphate modification is found at Asp-52.

Is phosphorylated by ChpT-P on Asp-52.

Its subcellular location is the cytoplasm. Component of a regulatory phosphorelay system that controls B.abortus cell growth, division, and intracellular survival inside mammalian host cells. This signaling pathway is composed of CckA, ChpT, CtrA and CpdR. CpdR is a response regulator substrate of ChpT. Unphosphorylated CpdR controls steady-state levels of CtrA in the B.abortus cell, likely via CtrA destabilization and activation of its proteolysis. The chain is Response regulator receiver protein CpdR from Brucella abortus (strain 2308).